The primary structure comprises 194 residues: Imidazoleglycerol-phosphate dehydratase (194 aa).

Belongs to the imidazoleglycerol-phosphate dehydratase family.

It is found in the cytoplasm. The catalysed reaction is D-erythro-1-(imidazol-4-yl)glycerol 3-phosphate = 3-(imidazol-4-yl)-2-oxopropyl phosphate + H2O. It functions in the pathway amino-acid biosynthesis; L-histidine biosynthesis; L-histidine from 5-phospho-alpha-D-ribose 1-diphosphate: step 6/9. The chain is Imidazoleglycerol-phosphate dehydratase from Chlorobaculum tepidum (strain ATCC 49652 / DSM 12025 / NBRC 103806 / TLS) (Chlorobium tepidum).